The chain runs to 426 residues: Serine--tRNA ligase (426 aa).

An L-serine-binding site is contributed by 233–235; sequence TAE. 264–266 is an ATP binding site; that stretch reads RSE. E287 contacts L-serine. 351–354 is a binding site for ATP; that stretch reads EISS. S387 provides a ligand contact to L-serine.

The protein belongs to the class-II aminoacyl-tRNA synthetase family. Type-1 seryl-tRNA synthetase subfamily. As to quaternary structure, homodimer. The tRNA molecule binds across the dimer.

Its subcellular location is the cytoplasm. It catalyses the reaction tRNA(Ser) + L-serine + ATP = L-seryl-tRNA(Ser) + AMP + diphosphate + H(+). It carries out the reaction tRNA(Sec) + L-serine + ATP = L-seryl-tRNA(Sec) + AMP + diphosphate + H(+). The protein operates within aminoacyl-tRNA biosynthesis; selenocysteinyl-tRNA(Sec) biosynthesis; L-seryl-tRNA(Sec) from L-serine and tRNA(Sec): step 1/1. Functionally, catalyzes the attachment of serine to tRNA(Ser). Is also able to aminoacylate tRNA(Sec) with serine, to form the misacylated tRNA L-seryl-tRNA(Sec), which will be further converted into selenocysteinyl-tRNA(Sec). The protein is Serine--tRNA ligase of Clostridium tetani (strain Massachusetts / E88).